A 272-amino-acid polypeptide reads, in one-letter code: Indole-3-glycerol phosphate synthase (272 aa).

The protein belongs to the TrpC family.

The enzyme catalyses 1-(2-carboxyphenylamino)-1-deoxy-D-ribulose 5-phosphate + H(+) = (1S,2R)-1-C-(indol-3-yl)glycerol 3-phosphate + CO2 + H2O. It functions in the pathway amino-acid biosynthesis; L-tryptophan biosynthesis; L-tryptophan from chorismate: step 4/5. This Mycolicibacterium smegmatis (strain ATCC 700084 / mc(2)155) (Mycobacterium smegmatis) protein is Indole-3-glycerol phosphate synthase.